Reading from the N-terminus, the 451-residue chain is Tubulin alpha chain (451 aa).

Gln11 is a GTP binding site. Lys40 is modified (N6-acetyllysine). GTP-binding residues include Glu71, Gly144, Thr145, Thr179, Asn206, and Asn228. Glu71 serves as a coordination point for Mg(2+). Glu254 is an active-site residue.

Belongs to the tubulin family. As to quaternary structure, dimer of alpha and beta chains. A typical microtubule is a hollow water-filled tube with an outer diameter of 25 nm and an inner diameter of 15 nM. Alpha-beta heterodimers associate head-to-tail to form protofilaments running lengthwise along the microtubule wall with the beta-tubulin subunit facing the microtubule plus end conferring a structural polarity. Microtubules usually have 13 protofilaments but different protofilament numbers can be found in some organisms and specialized cells. The cofactor is Mg(2+). In terms of processing, undergoes a tyrosination/detyrosination cycle, the cyclic removal and re-addition of a C-terminal tyrosine residue by the enzymes tubulin tyrosine carboxypeptidase (TTCP) and tubulin tyrosine ligase (TTL), respectively. Acetylation of alpha chains at Lys-40 stabilizes microtubules and affects affinity and processivity of microtubule motors. This modification has a role in multiple cellular functions, ranging from cell motility, cell cycle progression or cell differentiation to intracellular trafficking and signaling.

It localises to the cytoplasm. Its subcellular location is the cytoskeleton. It carries out the reaction GTP + H2O = GDP + phosphate + H(+). Its function is as follows. Tubulin is the major constituent of microtubules, a cylinder consisting of laterally associated linear protofilaments composed of alpha- and beta-tubulin heterodimers. Microtubules grow by the addition of GTP-tubulin dimers to the microtubule end, where a stabilizing cap forms. Below the cap, tubulin dimers are in GDP-bound state, owing to GTPase activity of alpha-tubulin. The sequence is that of Tubulin alpha chain (TUBA) from Triticum aestivum (Wheat).